The sequence spans 142 residues: Large ribosomal subunit protein uL16 (142 aa).

This sequence belongs to the universal ribosomal protein uL16 family. Part of the 50S ribosomal subunit.

Functionally, binds 23S rRNA and is also seen to make contacts with the A and possibly P site tRNAs. The polypeptide is Large ribosomal subunit protein uL16 (Thermotoga maritima (strain ATCC 43589 / DSM 3109 / JCM 10099 / NBRC 100826 / MSB8)).